A 1550-amino-acid polypeptide reads, in one-letter code: Gag-Pol polyprotein (1550 aa).

Glycine 2 is lipidated: N-myristoyl glycine; by host. The segment at 7-31 (VLRGKKADELEKVRLRPGGKKKYRL) is interaction with Gp41. Residues 16–22 (LEKVRLR) carry the Nuclear export signal motif. Positions 26 to 32 (KKKYRLK) match the Nuclear localization signal motif. The disordered stretch occupies residues 110–136 (AETGTAEKMPNTSRPTAPPSGKRGNYP). Tyrosine 135 is subject to Phosphotyrosine; by host. Residues 191–228 (NCVGDHQAAMQIIREIINEEAADWDSQHPIPGPLPAGQ) are interaction with human PPIA/CYPA and NUP153. A dimerization/Multimerization of capsid protein p24 region spans residues 279-365 (YNPTNILDIK…GGPGQKARLM (87 aa)). 2 consecutive CCHC-type zinc fingers follow at residues 389–406 (IRYWNCGKEGHSARQCRA) and 410–427 (QGCWKCGKPGHIMANCPE). The tract at residues 437-508 (PTGKEASQLP…ERDTSQRGDR (72 aa)) is disordered. Low complexity predominate over residues 456 to 469 (TNSTSGRSSSGTVG). Residues 497–508 (RAERDTSQRGDR) are compositionally biased toward basic and acidic residues. Positions 513 to 517 (PQFSL) are dimerization of protease. One can recognise a Peptidase A2 domain in the interval 532-601 (VEVLLDTGAD…TPINIFGRNI (70 aa)). Residue aspartate 537 is the For protease activity; shared with dimeric partner of the active site. Dimerization of protease stretches follow at residues 561-567 (GIGGFIN) and 600-612 (NILTALGMSLNLP). Residues 655–845 (EGQLEEAPPT…PPFQWMGCEL (191 aa)) form the Reverse transcriptase domain. Residues aspartate 721, aspartate 796, and aspartate 797 each coordinate Mg(2+). Residues 838–846 (FQWMGCELW) form an RT 'primer grip' region. The short motif at 1008–1024 (WEQWWDNYWQVTWIPEW) is the Tryptophan repeat motif element. The 124-residue stretch at 1044–1167 (IPGAETFYTD…VDHLVSQGIR (124 aa)) folds into the RNase H type-1 domain. Mg(2+)-binding residues include aspartate 1053, glutamate 1088, aspartate 1108, and aspartate 1159. An Integrase-type zinc finger spans residues 1173 to 1214 (EKIEPAQEEHEKYHSIIKELTHKFGIPLLVARQIVNSCAQCQ). Zn(2+) is bound by residues histidine 1182, histidine 1186, cysteine 1210, and cysteine 1213. One can recognise an Integrase catalytic domain in the interval 1223–1374 (QVNAEIGVWQ…TPAERLINMI (152 aa)). Residues aspartate 1234, aspartate 1286, and glutamate 1322 each contribute to the Mg(2+) site. The integrase-type DNA-binding region spans 1393-1440 (FQVYYREGRDQLWKGPGELLWKGEGAVIVKVGTDIKVVPRRKAKIIRD).

As to quaternary structure, homotrimer; further assembles as hexamers of trimers. Interacts with gp41 (via C-terminus). Interacts with host CALM1; this interaction induces a conformational change in the Matrix protein, triggering exposure of the myristate group. Interacts with host AP3D1; this interaction allows the polyprotein trafficking to multivesicular bodies during virus assembly. Part of the pre-integration complex (PIC) which is composed of viral genome, matrix protein, Vpr and integrase. Homodimer; the homodimer further multimerizes as homohexamers or homopentamers. Interacts with human PPIA/CYPA. Interacts with human NUP153. Interacts with host PDZD8; this interaction stabilizes the capsid. Interacts with monkey TRIM5; this interaction destabilizes the capsid. In terms of assembly, homodimer, whose active site consists of two apposed aspartic acid residues. As to quaternary structure, heterodimer of p66 RT and p51 RT (RT p66/p51). Heterodimerization of RT is essential for DNA polymerase activity. The overall folding of the subdomains is similar in p66 RT and p51 RT but the spatial arrangements of the subdomains are dramatically different. Homotetramer; may further associate as a homohexadecamer. Part of the pre-integration complex (PIC) which is composed of viral genome, matrix protein, Vpr and integrase. Interacts with human SMARCB1/INI1 and human PSIP1/LEDGF isoform 1. Interacts with human KPNA3; this interaction might play a role in nuclear import of the pre-integration complex. Interacts with human NUP153; this interaction might play a role in nuclear import of the pre-integration complex. Mg(2+) serves as cofactor. Specific enzymatic cleavages by the viral protease yield mature proteins. The protease is released by autocatalytic cleavage. The polyprotein is cleaved during and after budding, this process is termed maturation. Proteolytic cleavage of p66 RT removes the RNase H domain to yield the p51 RT subunit. Nucleocapsid protein p7 might be further cleaved after virus entry.

The protein resides in the host cell membrane. The protein localises to the host endosome. It is found in the host multivesicular body. It localises to the virion membrane. Its subcellular location is the host nucleus. The protein resides in the host cytoplasm. The protein localises to the virion. It carries out the reaction Endopeptidase for which the P1 residue is preferably hydrophobic.. It catalyses the reaction Endohydrolysis of RNA in RNA/DNA hybrids. Three different cleavage modes: 1. sequence-specific internal cleavage of RNA. Human immunodeficiency virus type 1 and Moloney murine leukemia virus enzymes prefer to cleave the RNA strand one nucleotide away from the RNA-DNA junction. 2. RNA 5'-end directed cleavage 13-19 nucleotides from the RNA end. 3. DNA 3'-end directed cleavage 15-20 nucleotides away from the primer terminus.. The enzyme catalyses 3'-end directed exonucleolytic cleavage of viral RNA-DNA hybrid.. The catalysed reaction is DNA(n) + a 2'-deoxyribonucleoside 5'-triphosphate = DNA(n+1) + diphosphate. With respect to regulation, protease: The viral protease is inhibited by many synthetic protease inhibitors (PIs), such as amprenavir, atazanavir, indinavir, loprinavir, nelfinavir, ritonavir and saquinavir. Use of protease inhibitors in tritherapy regimens permit more ambitious therapeutic strategies. Reverse transcriptase/ribonuclease H: RT can be inhibited either by nucleoside RT inhibitors (NRTIs) or by non nucleoside RT inhibitors (NNRTIs). NRTIs act as chain terminators, whereas NNRTIs inhibit DNA polymerization by binding a small hydrophobic pocket near the RT active site and inducing an allosteric change in this region. Classical NRTIs are abacavir, adefovir (PMEA), didanosine (ddI), lamivudine (3TC), stavudine (d4T), tenofovir (PMPA), zalcitabine (ddC), and zidovudine (AZT). Classical NNRTIs are atevirdine (BHAP U-87201E), delavirdine, efavirenz (DMP-266), emivirine (I-EBU), and nevirapine (BI-RG-587). The tritherapies used as a basic effective treatment of AIDS associate two NRTIs and one NNRTI. Its function is as follows. Mediates, with Gag polyprotein, the essential events in virion assembly, including binding the plasma membrane, making the protein-protein interactions necessary to create spherical particles, recruiting the viral Env proteins, and packaging the genomic RNA via direct interactions with the RNA packaging sequence (Psi). Gag-Pol polyprotein may regulate its own translation, by the binding genomic RNA in the 5'-UTR. At low concentration, the polyprotein would promote translation, whereas at high concentration, the polyprotein would encapsidate genomic RNA and then shut off translation. Targets the polyprotein to the plasma membrane via a multipartite membrane-binding signal, that includes its myristoylated N-terminus. Matrix protein is part of the pre-integration complex. Implicated in the release from host cell mediated by Vpu. Binds to RNA. In terms of biological role, forms the conical core that encapsulates the genomic RNA-nucleocapsid complex in the virion. Most core are conical, with only 7% tubular. The core is constituted by capsid protein hexamer subunits. The core is disassembled soon after virion entry. Host restriction factors such as TRIM5-alpha or TRIMCyp bind retroviral capsids and cause premature capsid disassembly, leading to blocks in reverse transcription. Capsid restriction by TRIM5 is one of the factors which restricts HIV-1 to the human species. Host PIN1 apparently facilitates the virion uncoating. On the other hand, interactions with PDZD8 or CYPA stabilize the capsid. Functionally, encapsulates and protects viral dimeric unspliced genomic RNA (gRNA). Binds these RNAs through its zinc fingers. Acts as a nucleic acid chaperone which is involved in rearangement of nucleic acid secondary structure during gRNA retrotranscription. Also facilitates template switch leading to recombination. As part of the polyprotein, participates in gRNA dimerization, packaging, tRNA incorporation and virion assembly. Its function is as follows. Aspartyl protease that mediates proteolytic cleavages of Gag and Gag-Pol polyproteins during or shortly after the release of the virion from the plasma membrane. Cleavages take place as an ordered, step-wise cascade to yield mature proteins. This process is called maturation. Displays maximal activity during the budding process just prior to particle release from the cell. Also cleaves Nef and Vif, probably concomitantly with viral structural proteins on maturation of virus particles. Hydrolyzes host EIF4GI and PABP1 in order to shut off the capped cellular mRNA translation. The resulting inhibition of cellular protein synthesis serves to ensure maximal viral gene expression and to evade host immune response. Multifunctional enzyme that converts the viral RNA genome into dsDNA in the cytoplasm, shortly after virus entry into the cell. This enzyme displays a DNA polymerase activity that can copy either DNA or RNA templates, and a ribonuclease H (RNase H) activity that cleaves the RNA strand of RNA-DNA heteroduplexes in a partially processive 3' to 5' endonucleasic mode. Conversion of viral genomic RNA into dsDNA requires many steps. A tRNA(3)-Lys binds to the primer-binding site (PBS) situated at the 5'-end of the viral RNA. RT uses the 3' end of the tRNA primer to perform a short round of RNA-dependent minus-strand DNA synthesis. The reading proceeds through the U5 region and ends after the repeated (R) region which is present at both ends of viral RNA. The portion of the RNA-DNA heteroduplex is digested by the RNase H, resulting in a ssDNA product attached to the tRNA primer. This ssDNA/tRNA hybridizes with the identical R region situated at the 3' end of viral RNA. This template exchange, known as minus-strand DNA strong stop transfer, can be either intra- or intermolecular. RT uses the 3' end of this newly synthesized short ssDNA to perform the RNA-dependent minus-strand DNA synthesis of the whole template. RNase H digests the RNA template except for two polypurine tracts (PPTs) situated at the 5'-end and near the center of the genome. It is not clear if both polymerase and RNase H activities are simultaneous. RNase H probably can proceed both in a polymerase-dependent (RNA cut into small fragments by the same RT performing DNA synthesis) and a polymerase-independent mode (cleavage of remaining RNA fragments by free RTs). Secondly, RT performs DNA-directed plus-strand DNA synthesis using the PPTs that have not been removed by RNase H as primers. PPTs and tRNA primers are then removed by RNase H. The 3' and 5' ssDNA PBS regions hybridize to form a circular dsDNA intermediate. Strand displacement synthesis by RT to the PBS and PPT ends produces a blunt ended, linear dsDNA copy of the viral genome that includes long terminal repeats (LTRs) at both ends. In terms of biological role, catalyzes viral DNA integration into the host chromosome, by performing a series of DNA cutting and joining reactions. This enzyme activity takes place after virion entry into a cell and reverse transcription of the RNA genome in dsDNA. The first step in the integration process is 3' processing. This step requires a complex comprising the viral genome, matrix protein, Vpr and integrase. This complex is called the pre-integration complex (PIC). The integrase protein removes 2 nucleotides from each 3' end of the viral DNA, leaving recessed CA OH's at the 3' ends. In the second step, the PIC enters cell nucleus. This process is mediated through integrase and Vpr proteins, and allows the virus to infect a non dividing cell. This ability to enter the nucleus is specific of lentiviruses, other retroviruses cannot and rely on cell division to access cell chromosomes. In the third step, termed strand transfer, the integrase protein joins the previously processed 3' ends to the 5' ends of strands of target cellular DNA at the site of integration. The 5'-ends are produced by integrase-catalyzed staggered cuts, 5 bp apart. A Y-shaped, gapped, recombination intermediate results, with the 5'-ends of the viral DNA strands and the 3' ends of target DNA strands remaining unjoined, flanking a gap of 5 bp. The last step is viral DNA integration into host chromosome. This involves host DNA repair synthesis in which the 5 bp gaps between the unjoined strands are filled in and then ligated. Since this process occurs at both cuts flanking the HIV genome, a 5 bp duplication of host DNA is produced at the ends of HIV-1 integration. Alternatively, Integrase may catalyze the excision of viral DNA just after strand transfer, this is termed disintegration. The polypeptide is Gag-Pol polyprotein (gag-pol) (Homo sapiens (Human)).